Reading from the N-terminus, the 223-residue chain is Ras-related protein Rab-21 (223 aa).

Ala-2 is modified (N-acetylalanine). The GTP site is built by Gly-26, Gly-29, Lys-30, Thr-31, Ser-32, Asn-43, Asp-44, His-46, Thr-48, and Thr-49. Thr-31 lines the Mg(2+) pocket. The short motif at 41-54 (KFNDKHITTLQASF) is the Switch 1 element. Residues Thr-49 and Asp-72 each coordinate Mg(2+). The Switch 2 motif lies at 74 to 92 (AGQERFHALGPIYYRDSNG). The GTP site is built by Gly-75, Asn-130, Lys-131, Asp-133, Ala-161, and Lys-162. 2 S-geranylgeranyl cysteine lipidation sites follow: Cys-219 and Cys-220. Residue Cys-220 is modified to Cysteine methyl ester. Positions 221–223 (SSG) are cleaved as a propeptide — removed in mature form.

This sequence belongs to the small GTPase superfamily. Rab family. Interacts with the cytoplasmic tail of integrins ITGA1, ITGA2, ITGA5, ITGA6, ITGA11 and ITGB1; this interaction is dependent upon its GDP/GTP cycle. Interacts with ANKRD27. Interacts (active GTP-bound form) with TMED10; the interaction is indirect and regulates TMED10 abundance and localization at the Golgi. Mg(2+) is required as a cofactor.

It is found in the endoplasmic reticulum membrane. Its subcellular location is the golgi apparatus. The protein resides in the trans-Golgi network. The protein localises to the golgi apparatus membrane. It localises to the early endosome membrane. It is found in the cytoplasmic vesicle membrane. Its subcellular location is the cleavage furrow. The protein resides in the cell projection. The protein localises to the neuron projection. The catalysed reaction is GTP + H2O = GDP + phosphate + H(+). With respect to regulation, regulated by guanine nucleotide exchange factors (GEFs) including ANKRD27 and RABGEF1, which promote the exchange of bound GDP for free GTP. Regulated by GTPase activating proteins (GAPs) which increase the GTP hydrolysis activity. Inhibited by GDP dissociation inhibitors (GDIs). The small GTPases Rab are key regulators of intracellular membrane trafficking, from the formation of transport vesicles to their fusion with membranes. Rabs cycle between an inactive GDP-bound form and an active GTP-bound form that is able to recruit to membranes different sets of downstream effectors directly responsible for vesicle formation, movement, tethering and fusion. RAB21 is involved in membrane trafficking control. Regulates integrin internalization and recycling, but does not influence the traffic of endosomally translocated receptors in general. As a result, may regulate cell adhesion and migration. During the mitosis of adherent cells, controls the endosomal trafficking of integrins which is required for the successful completion of cytokinesis. Involved in neurite growth. Modulates protein levels of the cargo receptors TMED2 and TMED10, and required for appropriate Golgi localization of TMED10. The sequence is that of Ras-related protein Rab-21 (RAB21) from Canis lupus familiaris (Dog).